A 247-amino-acid polypeptide reads, in one-letter code: Large ribosomal subunit protein uL24m (247 aa).

The KOW domain maps to Phe84–Glu117.

It belongs to the universal ribosomal protein uL24 family. Component of the mitochondrial ribosome large subunit (39S) which comprises a 16S rRNA and about 50 distinct proteins.

The protein resides in the mitochondrion. This chain is Large ribosomal subunit protein uL24m (mRpL24), found in Drosophila melanogaster (Fruit fly).